The sequence spans 543 residues: Malate synthase (543 aa).

This sequence belongs to the malate synthase family. As to quaternary structure, homodimer.

It is found in the cytoplasm. It carries out the reaction glyoxylate + acetyl-CoA + H2O = (S)-malate + CoA + H(+). Its pathway is carbohydrate metabolism; glyoxylate cycle; (S)-malate from isocitrate: step 2/2. This chain is Malate synthase (aceB), found in Streptomyces arenae.